The following is a 94-amino-acid chain: Late cornified envelope-like proline-rich protein 1 (94 aa).

2 disordered regions span residues 1-26 (MSSD…CEQK) and 47-94 (CPRE…PPPE). Positions 53–94 (PAPPKCPPCPSPSPSSCPPKPCAKPCPPKCPSSCPPPCPPPE) are enriched in pro residues.

The protein belongs to the cornifin (SPRR) family.

This is Late cornified envelope-like proline-rich protein 1 (LELP1) from Macaca fascicularis (Crab-eating macaque).